Consider the following 659-residue polypeptide: Mitochondrial Rho GTPase 1 (659 aa).

Topologically, residues 1 to 631 are cytoplasmic; sequence MTKTRIRIVV…LTNDIDYRQT (631 aa). The 181-residue stretch at 3 to 183 folds into the Miro 1 domain; it reads KTRIRIVVCG…FYLCQRTITN (181 aa). Residues 12-19, 61-63, and 115-118 each bind GTP; these read GDSGVGKT, DTG, and NKCD. 2 EF-hand domains span residues 199 to 234 and 328 to 363; these read LGVL…CFSK and LGYR…TPGL. The Ca(2+) site is built by aspartate 212, aspartate 214, aspartate 216, glutamate 223, aspartate 341, aspartate 343, aspartate 345, and glutamate 352. Residues 444–609 enclose the Miro 2 domain; that stretch reads RKVLNCYMLG…FIKLTEVALE (166 aa). GTP contacts are provided by residues 453–460, 489–493, and 558–561; these read GKGNSGKS, ELKGG, and LKAD. A helical; Anchor for type IV membrane protein transmembrane segment spans residues 632-652; the sequence is IVAISSVVGFASLFTFTALKI. The Mitochondrial intermembrane segment spans residues 653-659; the sequence is YSSFKNT.

Belongs to the mitochondrial Rho GTPase family.

Its subcellular location is the mitochondrion outer membrane. Mitochondrial GTPase involved in mitochondrial trafficking. Probably involved in control of anterograde transport of mitochondria and their subcellular distribution. The polypeptide is Mitochondrial Rho GTPase 1 (GEM1) (Kluyveromyces lactis (strain ATCC 8585 / CBS 2359 / DSM 70799 / NBRC 1267 / NRRL Y-1140 / WM37) (Yeast)).